We begin with the raw amino-acid sequence, 482 residues long: Transcription termination/antitermination protein NusA (482 aa).

The region spanning 133–197 is the S1 motif domain; that stretch reads NKVVIGYVQQ…NGIEVILSRT (65 aa). The KH domain occupies 300-446; the sequence is LHKALVVVSD…NDNDESMEKV (147 aa).

It belongs to the NusA family. As to quaternary structure, monomer. Binds directly to the core enzyme of the DNA-dependent RNA polymerase and to nascent RNA.

The protein resides in the cytoplasm. Functionally, participates in both transcription termination and antitermination. The chain is Transcription termination/antitermination protein NusA from Borreliella burgdorferi (strain ATCC 35210 / DSM 4680 / CIP 102532 / B31) (Borrelia burgdorferi).